A 254-amino-acid chain; its full sequence is Probable phosphoglycerate mutase 4 (254 aa).

Substrate contacts are provided by residues 10 to 17 (RHGESTWN) and 23 to 24 (SC). His-11 functions as the Tele-phosphohistidine intermediate in the catalytic mechanism. Phosphoserine occurs at positions 14 and 23. Residue Tyr-26 is modified to Phosphotyrosine. At Ser-31 the chain carries Phosphoserine. Residues Arg-62, 89–92 (ERHY), and Lys-100 contribute to the substrate site. Glu-89 functions as the Proton donor/acceptor in the catalytic mechanism. Lys-106 is modified (N6-acetyllysine). A substrate-binding site is contributed by 116 to 117 (RR). Ser-118 is subject to Phosphoserine. Residue 187-188 (GN) participates in substrate binding. N6-acetyllysine; alternate is present on Lys-251. Position 251 is an N6-succinyllysine; alternate (Lys-251). Lys-253 and Lys-254 each carry N6-acetyllysine.

It belongs to the phosphoglycerate mutase family. BPG-dependent PGAM subfamily.

It carries out the reaction (2R)-2-phosphoglycerate = (2R)-3-phosphoglycerate. It catalyses the reaction (2R)-3-phospho-glyceroyl phosphate = (2R)-2,3-bisphosphoglycerate + H(+). The protein is Probable phosphoglycerate mutase 4 (PGAM4) of Pan troglodytes (Chimpanzee).